A 320-amino-acid chain; its full sequence is Glyoxylate/hydroxypyruvate reductase B (320 aa).

Catalysis depends on residues R233 and E262. Catalysis depends on H281, which acts as the Proton donor.

This sequence belongs to the D-isomer specific 2-hydroxyacid dehydrogenase family. GhrB subfamily. Homodimer.

Its subcellular location is the cytoplasm. It carries out the reaction glycolate + NADP(+) = glyoxylate + NADPH + H(+). It catalyses the reaction (R)-glycerate + NAD(+) = 3-hydroxypyruvate + NADH + H(+). The enzyme catalyses (R)-glycerate + NADP(+) = 3-hydroxypyruvate + NADPH + H(+). In terms of biological role, catalyzes the NADPH-dependent reduction of glyoxylate and hydroxypyruvate into glycolate and glycerate, respectively. The polypeptide is Glyoxylate/hydroxypyruvate reductase B (Pectobacterium carotovorum subsp. carotovorum (strain PC1)).